The following is a 275-amino-acid chain: Tryptophan synthase alpha chain (275 aa).

Active-site proton acceptor residues include E58 and D69.

The protein belongs to the TrpA family. In terms of assembly, tetramer of two alpha and two beta chains. As to expression, ubiquitously expressed at low levels in seedlings, roots, hypocotyls, cotyledons, stems, leaves, inflorescences, flowers, siliques and seeds.

The protein localises to the cytoplasm. The catalysed reaction is (1S,2R)-1-C-(indol-3-yl)glycerol 3-phosphate + L-serine = D-glyceraldehyde 3-phosphate + L-tryptophan + H2O. The enzyme catalyses (1S,2R)-1-C-(indol-3-yl)glycerol 3-phosphate = indole + D-glyceraldehyde 3-phosphate. Its pathway is amino-acid biosynthesis; L-tryptophan biosynthesis; L-tryptophan from chorismate: step 5/5. Functionally, the alpha subunit is responsible for the aldol cleavage of indoleglycerol phosphate to indole and glyceraldehyde 3-phosphate. Contributes to the tryptophan-independent indole biosynthesis, and possibly to auxin production. The chain is Tryptophan synthase alpha chain (TRPA1) from Arabidopsis thaliana (Mouse-ear cress).